The chain runs to 130 residues: Cuticle protein 14 isoform a (130 aa).

The 67-residue stretch at 24–90 folds into the Chitin-binding type R&amp;R domain; that stretch reads IGNYNFGYNE…NVHTNEPGTD (67 aa).

The chain is Cuticle protein 14 isoform a from Limulus polyphemus (Atlantic horseshoe crab).